The sequence spans 162 residues: Peptide methionine sulfoxide reductase MsrA (162 aa).

Cysteine 10 is an active-site residue.

This sequence belongs to the MsrA Met sulfoxide reductase family.

The enzyme catalyses L-methionyl-[protein] + [thioredoxin]-disulfide + H2O = L-methionyl-(S)-S-oxide-[protein] + [thioredoxin]-dithiol. It catalyses the reaction [thioredoxin]-disulfide + L-methionine + H2O = L-methionine (S)-S-oxide + [thioredoxin]-dithiol. Has an important function as a repair enzyme for proteins that have been inactivated by oxidation. Catalyzes the reversible oxidation-reduction of methionine sulfoxide in proteins to methionine. The chain is Peptide methionine sulfoxide reductase MsrA from Clostridium acetobutylicum (strain ATCC 824 / DSM 792 / JCM 1419 / IAM 19013 / LMG 5710 / NBRC 13948 / NRRL B-527 / VKM B-1787 / 2291 / W).